Here is a 147-residue protein sequence, read N- to C-terminus: Anti-sigma F factor (147 aa).

Belongs to the anti-sigma-factor family.

The enzyme catalyses L-seryl-[protein] + ATP = O-phospho-L-seryl-[protein] + ADP + H(+). It carries out the reaction L-threonyl-[protein] + ATP = O-phospho-L-threonyl-[protein] + ADP + H(+). In terms of biological role, binds to sigma F and blocks its ability to form an RNA polymerase holoenzyme (E-sigma F). Phosphorylates SpoIIAA on a serine residue. This phosphorylation may enable SpoIIAA to act as an anti-anti-sigma factor that counteracts SpoIIAB and thus releases sigma F from inhibition. In Priestia megaterium (Bacillus megaterium), this protein is Anti-sigma F factor.